Consider the following 172-residue polypeptide: Large ribosomal subunit protein uL10 (172 aa).

It belongs to the universal ribosomal protein uL10 family. As to quaternary structure, part of the ribosomal stalk of the 50S ribosomal subunit. The N-terminus interacts with L11 and the large rRNA to form the base of the stalk. The C-terminus forms an elongated spine to which L12 dimers bind in a sequential fashion forming a multimeric L10(L12)X complex.

In terms of biological role, forms part of the ribosomal stalk, playing a central role in the interaction of the ribosome with GTP-bound translation factors. This Parvibaculum lavamentivorans (strain DS-1 / DSM 13023 / NCIMB 13966) protein is Large ribosomal subunit protein uL10.